The chain runs to 125 residues: Large ribosomal subunit protein bL17 (125 aa).

The protein belongs to the bacterial ribosomal protein bL17 family. Part of the 50S ribosomal subunit. Contacts protein L32.

The polypeptide is Large ribosomal subunit protein bL17 (Marinomonas sp. (strain MWYL1)).